The primary structure comprises 116 residues: MSATAATAPPAAPAGEGGPPAPPPNLTSNRRLQQTQAQVDEVVDIMRVNVDKVLERDQKLSELDDRADALQAGASQFETSAAKLKRKYWWKNLKMMIILGVICAIILIIIIVYFST.

The interval M1 to Q33 is disordered. Residue S2 is modified to N-acetylserine. The Cytoplasmic segment spans residues S2–K94. A v-SNARE coiled-coil homology domain is found at R31–K91. The tract at residues N92 to T116 is required for interaction with SEPT8. Residues M95–F114 form a helical; Anchor for type IV membrane protein membrane-spanning segment. Over S115–T116 the chain is Vesicular.

Belongs to the synaptobrevin family. Part of the SNARE core complex containing SNAP25, VAMP2 and STX1A; this complex constitutes the basic catalytic machinery of the complex neurotransmitter release apparatus. Recruited to the SNARE complex following binding of the SNARE complex component STX1A to STXBP1. This complex binds to CPLX1. Interacts with POPDC1 and STX4. Interacts with VAPA and VAPB. Interacts with WDFY2, PRKCZ and PRKCI. Forms a complex with WDFY2 and PRKCZ. Interacts (via N-terminus) with KCNB1 (via N-terminus and C-terminus); stimulates the channel inactivation rate of KCNB1. Interacts with SEPT8; the interaction inhibits interaction of VAMP2 with SYP. Interacts with SYP; the interaction is inhibited by interaction with SEPT8. Interacts with PICALM. Interacts with alpha-synuclein/SNCA. Interacts with STX3. Post-translationally, phosphorylated by PRKCZ in vitro and this phosphorylation is increased in the presence of WDFY2. (Microbial infection) Targeted and hydrolyzed by C.botulinum neurotoxin type B (BoNT/B, botB) which hydrolyzes the 76-Gln-|-Phe-77 bond and probably inhibits neurotransmitter release. In terms of processing, (Microbial infection) Targeted and hydrolyzed by C.botulinum neurotoxin type D (BoNT/D, botD) which probably hydrolyzes the 59-Lys-|-Leu-60 bond and inhibits neurotransmitter release. Note that humans are not known to be infected by C.botulinum type D. Post-translationally, (Microbial infection) Targeted and hydrolyzed by C.botulinum neurotoxin type F (BoNT/F, botF) which hydrolyzes the 58-Gln-|-Lys-59 bond and probably inhibits neurotransmitter release. (Microbial infection) Targeted and hydrolyzed by C.tetani tetanus toxin (tetX) which hydrolyzes the 76-Gln-|-Phe-77 bond and probably inhibits neurotransmitter release. Nervous system and skeletal muscle.

It is found in the cytoplasmic vesicle. The protein resides in the secretory vesicle. The protein localises to the synaptic vesicle membrane. It localises to the cell membrane. In terms of biological role, involved in the targeting and/or fusion of transport vesicles to their target membrane. Major SNARE protein of synaptic vesicles which mediates fusion of synaptic vesicles to release neurotransmitters. Essential for fast vesicular exocytosis and activity-dependent neurotransmitter release as well as fast endocytosis that mediates rapid reuse of synaptic vesicles. Modulates the gating characteristics of the delayed rectifier voltage-dependent potassium channel KCNB1. The protein is Vesicle-associated membrane protein 2 of Homo sapiens (Human).